The following is a 959-amino-acid chain: Isoleucine--tRNA ligase (959 aa).

A 'HIGH' region motif is present at residues 60-70 (PYANGSLHIGH). E571 provides a ligand contact to L-isoleucyl-5'-AMP. Residues 612-616 (KMSKS) carry the 'KMSKS' region motif. ATP is bound at residue K615. Positions 928, 931, 948, and 951 each coordinate Zn(2+).

This sequence belongs to the class-I aminoacyl-tRNA synthetase family. IleS type 1 subfamily. Monomer. Zn(2+) is required as a cofactor.

It localises to the cytoplasm. The enzyme catalyses tRNA(Ile) + L-isoleucine + ATP = L-isoleucyl-tRNA(Ile) + AMP + diphosphate. Functionally, catalyzes the attachment of isoleucine to tRNA(Ile). As IleRS can inadvertently accommodate and process structurally similar amino acids such as valine, to avoid such errors it has two additional distinct tRNA(Ile)-dependent editing activities. One activity is designated as 'pretransfer' editing and involves the hydrolysis of activated Val-AMP. The other activity is designated 'posttransfer' editing and involves deacylation of mischarged Val-tRNA(Ile). The chain is Isoleucine--tRNA ligase from Nostoc punctiforme (strain ATCC 29133 / PCC 73102).